We begin with the raw amino-acid sequence, 1079 residues long: Isoleucine--tRNA ligase (1079 aa).

A 'HIGH' region motif is present at residues 53–63; the sequence is PFANGLPHYGH. Residues 611–615 carry the 'KMSKS' region motif; it reads KLSKR. An ATP-binding site is contributed by Lys614.

The protein belongs to the class-I aminoacyl-tRNA synthetase family. IleS type 2 subfamily. In terms of assembly, monomer. The cofactor is Zn(2+).

The protein resides in the cytoplasm. The catalysed reaction is tRNA(Ile) + L-isoleucine + ATP = L-isoleucyl-tRNA(Ile) + AMP + diphosphate. Catalyzes the attachment of isoleucine to tRNA(Ile). As IleRS can inadvertently accommodate and process structurally similar amino acids such as valine, to avoid such errors it has two additional distinct tRNA(Ile)-dependent editing activities. One activity is designated as 'pretransfer' editing and involves the hydrolysis of activated Val-AMP. The other activity is designated 'posttransfer' editing and involves deacylation of mischarged Val-tRNA(Ile). The protein is Isoleucine--tRNA ligase of Rickettsia canadensis (strain McKiel).